Reading from the N-terminus, the 416-residue chain is Phosphoglycerate kinase 2 (416 aa).

Substrate is bound by residues Asp-28–Asn-30, Arg-44, His-65–Arg-68, Arg-122, and Arg-162. ATP is bound by residues Glu-337 and Gly-362–Ile-365.

Belongs to the phosphoglycerate kinase family. Monomer.

The protein localises to the cytoplasm. The enzyme catalyses (2R)-3-phosphoglycerate + ATP = (2R)-3-phospho-glyceroyl phosphate + ADP. It functions in the pathway carbohydrate degradation; glycolysis; pyruvate from D-glyceraldehyde 3-phosphate: step 2/5. The polypeptide is Phosphoglycerate kinase 2 (Methanosarcina acetivorans (strain ATCC 35395 / DSM 2834 / JCM 12185 / C2A)).